Reading from the N-terminus, the 957-residue chain is SH3 domain-binding protein 4-B (957 aa).

The SH3 1 domain occupies 54–113 (ENVKEVVAIKDYCPNNFTTLKFSKGEHLYVLDASGGDWWYAHNTTEMGYIPSSYVQPLNY). The ZU5 domain maps to 312 to 449 (TSIVCRLDSS…LEPVMYVVMV (138 aa)). One can recognise an SH3 2 domain in the interval 649-719 (TSLKYGKLIK…HAKNVLVVGK (71 aa)).

As to quaternary structure, homodimer or homooligomer.

It is found in the membrane. It localises to the clathrin-coated pit. The protein localises to the cytoplasmic vesicle. Its subcellular location is the clathrin-coated vesicle. The protein resides in the nucleus. Its function is as follows. Possible role in regulating endocytosis of the transferrin receptor at the plasma membrane. Alternatively, may function as a negative regulator of the amino acid-induced TOR signaling by inhibiting the formation of active Rag GTPase complexes. Preferentially binds inactive Rag GTPase complexes and prevents their interaction with the mTORC1 complex inhibiting its relocalization to lysosomes and its activation. Thereby, may indirectly regulate cell growth, proliferation and autophagy. This Xenopus laevis (African clawed frog) protein is SH3 domain-binding protein 4-B (sh3bp4-b).